The sequence spans 442 residues: Trigger factor (442 aa).

Positions G162–T247 constitute a PPIase FKBP-type domain.

It belongs to the FKBP-type PPIase family. Tig subfamily.

Its subcellular location is the cytoplasm. The enzyme catalyses [protein]-peptidylproline (omega=180) = [protein]-peptidylproline (omega=0). Functionally, involved in protein export. Acts as a chaperone by maintaining the newly synthesized protein in an open conformation. Functions as a peptidyl-prolyl cis-trans isomerase. This is Trigger factor from Rickettsia canadensis (strain McKiel).